Reading from the N-terminus, the 216-residue chain is Uracil phosphoribosyltransferase (216 aa).

5-phospho-alpha-D-ribose 1-diphosphate is bound by residues Arg-85, Arg-110, and 135–143; that span reads DPMVATGYS. Uracil is bound by residues Ile-200 and 205–207; that span reads GDA. Position 206 (Asp-206) interacts with 5-phospho-alpha-D-ribose 1-diphosphate.

It belongs to the UPRTase family. The cofactor is Mg(2+).

It catalyses the reaction UMP + diphosphate = 5-phospho-alpha-D-ribose 1-diphosphate + uracil. It functions in the pathway pyrimidine metabolism; UMP biosynthesis via salvage pathway; UMP from uracil: step 1/1. Its activity is regulated as follows. Allosterically activated by GTP. Catalyzes the conversion of uracil and 5-phospho-alpha-D-ribose 1-diphosphate (PRPP) to UMP and diphosphate. The sequence is that of Uracil phosphoribosyltransferase from Burkholderia vietnamiensis (strain G4 / LMG 22486) (Burkholderia cepacia (strain R1808)).